Consider the following 1479-residue polypeptide: Chromosome partition protein MukB (1479 aa).

ATP is bound at residue 34-41; the sequence is GGNGAGKS. Coiled coils occupy residues 337–418, 511–604, 780–810, 847–1116, and 1206–1265; these read LNLV…QYQQ, QAER…APVW, RAAR…DVQK, ELDR…AKAG, and DDPV…LQAV. The interval 666-783 is flexible hinge; that stretch reads PGGSEDPRLN…EVPLFGRAAR (118 aa).

This sequence belongs to the SMC family. MukB subfamily. In terms of assembly, homodimerization via its hinge domain. Binds to DNA via its C-terminal region. Interacts, and probably forms a ternary complex, with MukE and MukF via its C-terminal region. The complex formation is stimulated by calcium or magnesium. Interacts with tubulin-related protein FtsZ.

The protein resides in the cytoplasm. It is found in the nucleoid. Plays a central role in chromosome condensation, segregation and cell cycle progression. Functions as a homodimer, which is essential for chromosome partition. Involved in negative DNA supercoiling in vivo, and by this means organize and compact chromosomes. May achieve or facilitate chromosome segregation by condensation DNA from both sides of a centrally located replisome during cell division. This is Chromosome partition protein MukB from Pectobacterium atrosepticum (strain SCRI 1043 / ATCC BAA-672) (Erwinia carotovora subsp. atroseptica).